The primary structure comprises 131 residues: Large ribosomal subunit protein bL19 (131 aa).

It belongs to the bacterial ribosomal protein bL19 family.

In terms of biological role, this protein is located at the 30S-50S ribosomal subunit interface and may play a role in the structure and function of the aminoacyl-tRNA binding site. The protein is Large ribosomal subunit protein bL19 of Caulobacter sp. (strain K31).